The chain runs to 101 residues: Protein RnfH (101 aa).

This sequence belongs to the UPF0125 (RnfH) family.

This Coxiella burnetii (strain RSA 331 / Henzerling II) protein is Protein RnfH.